The following is a 247-amino-acid chain: Ubiquinone biosynthesis O-methyltransferase (247 aa).

Positions 41, 72, 93, and 136 each coordinate S-adenosyl-L-methionine.

It belongs to the methyltransferase superfamily. UbiG/COQ3 family.

The catalysed reaction is a 3-demethylubiquinol + S-adenosyl-L-methionine = a ubiquinol + S-adenosyl-L-homocysteine + H(+). It catalyses the reaction a 3-(all-trans-polyprenyl)benzene-1,2-diol + S-adenosyl-L-methionine = a 2-methoxy-6-(all-trans-polyprenyl)phenol + S-adenosyl-L-homocysteine + H(+). It functions in the pathway cofactor biosynthesis; ubiquinone biosynthesis. O-methyltransferase that catalyzes the 2 O-methylation steps in the ubiquinone biosynthetic pathway. The polypeptide is Ubiquinone biosynthesis O-methyltransferase (Bartonella tribocorum (strain CIP 105476 / IBS 506)).